The sequence spans 117 residues: Large ribosomal subunit protein bL20c (117 aa).

It belongs to the bacterial ribosomal protein bL20 family.

Its subcellular location is the plastid. The protein resides in the chloroplast. Its function is as follows. Binds directly to 23S ribosomal RNA and is necessary for the in vitro assembly process of the 50S ribosomal subunit. It is not involved in the protein synthesizing functions of that subunit. The chain is Large ribosomal subunit protein bL20c from Citrus sinensis (Sweet orange).